Consider the following 103-residue polypeptide: UPF0134 protein MPN_484 (103 aa).

The protein belongs to the UPF0134 family.

This Mycoplasma pneumoniae (strain ATCC 29342 / M129 / Subtype 1) (Mycoplasmoides pneumoniae) protein is UPF0134 protein MPN_484.